A 392-amino-acid chain; its full sequence is Succinyl-diaminopimelate desuccinylase (392 aa).

H78 contacts Zn(2+). Residue D80 is part of the active site. D110 provides a ligand contact to Zn(2+). The active-site Proton acceptor is the E145. Zn(2+)-binding residues include E146, E174, and H363.

Belongs to the peptidase M20A family. DapE subfamily. In terms of assembly, homodimer. It depends on Zn(2+) as a cofactor. The cofactor is Co(2+).

The enzyme catalyses N-succinyl-(2S,6S)-2,6-diaminopimelate + H2O = (2S,6S)-2,6-diaminopimelate + succinate. Its pathway is amino-acid biosynthesis; L-lysine biosynthesis via DAP pathway; LL-2,6-diaminopimelate from (S)-tetrahydrodipicolinate (succinylase route): step 3/3. In terms of biological role, catalyzes the hydrolysis of N-succinyl-L,L-diaminopimelic acid (SDAP), forming succinate and LL-2,6-diaminopimelate (DAP), an intermediate involved in the bacterial biosynthesis of lysine and meso-diaminopimelic acid, an essential component of bacterial cell walls. The chain is Succinyl-diaminopimelate desuccinylase from Methylobacterium radiotolerans (strain ATCC 27329 / DSM 1819 / JCM 2831 / NBRC 15690 / NCIMB 10815 / 0-1).